Reading from the N-terminus, the 166-residue chain is Biotin carboxyl carrier protein of acetyl-CoA carboxylase (166 aa).

The segment covering 61–70 (STASEASSPA) has biased composition (polar residues). The segment at 61-82 (STASEASSPASVKDVPVEEQPQ) is disordered. Residues 90–166 (GDIVESPLVG…EFGQGLVRIK (77 aa)) enclose the Biotinyl-binding domain. At Lys-132 the chain carries N6-biotinyllysine.

Homodimer.

It functions in the pathway lipid metabolism; fatty acid biosynthesis. Functionally, this protein is a component of the acetyl coenzyme A carboxylase complex; first, biotin carboxylase catalyzes the carboxylation of the carrier protein and then the transcarboxylase transfers the carboxyl group to form malonyl-CoA. This is Biotin carboxyl carrier protein of acetyl-CoA carboxylase from Streptococcus pyogenes serotype M6 (strain ATCC BAA-946 / MGAS10394).